A 284-amino-acid polypeptide reads, in one-letter code: Trimeric intracellular cation channel type B-B (284 aa).

Topologically, residues Met-1–Ser-15 are lumenal. A helical transmembrane segment spans residues Met-16–Ala-32. The Cytoplasmic portion of the chain corresponds to Arg-33–His-44. Residues Ser-45–Leu-68 traverse the membrane as a helical segment. Residues Ala-69 to Thr-79 lie on the Lumenal side of the membrane. Residues Thr-80–Leu-99 form a helical membrane-spanning segment. Topologically, residues Phe-100–Asn-102 are cytoplasmic. Residues Cys-103–Arg-121 form a helical membrane-spanning segment. A 1,2-diacyl-sn-glycero-3-phospho-(1D-myo-inositol-4,5-bisphosphate) is bound by residues Lys-117 and Arg-121. Over Thr-122–Ala-139 the chain is Lumenal. A helical transmembrane segment spans residues Trp-140 to Ile-157. The Cytoplasmic portion of the chain corresponds to Ser-158 to Met-178. The helical transmembrane segment at Ser-179 to His-196 threads the bilayer. Topologically, residues Gly-197–Arg-204 are lumenal. A helical transmembrane segment spans residues His-205–Thr-225. The Cytoplasmic segment spans residues His-226–Lys-284. Residues Gln-250 to Lys-284 are disordered. Positions Lys-269–Lys-284 are enriched in basic and acidic residues.

This sequence belongs to the TMEM38 family. Homotrimer; conformation seems to be controled by binding to diacylglycerol (DAG).

Its subcellular location is the endoplasmic reticulum membrane. The enzyme catalyses K(+)(in) = K(+)(out). Channel activity is activated by increased cytosolic Ca(2+) levels and blocked by luminal high Ca(2+) levels. Its function is as follows. Intracellular monovalent cation channel required for maintenance of rapid intracellular calcium release. Acts as a potassium counter-ion channel that functions in synchronization with calcium release from intracellular stores. Activated by increased cytosolic Ca(2+) levels. The chain is Trimeric intracellular cation channel type B-B (tmem38b-b) from Xenopus laevis (African clawed frog).